The chain runs to 526 residues: MERKRFIDCDSTKILQELALNPLDLTAPGVLSAERIKKFSLLGGGFTFSFATERLDDAILAALISLAEERGLHESMLAMQQGQVVNYIEGFPSEMRPALHTATRAWVTDSSFTGEAEDIAVRSRVEAQRLKDFLTKVRSQFTTIVQIGIGGSELGPKALYRALRAYCPTDKHVHFISNIDPDNGAEVLDTIDCAKALVVVVSKSGTTIETAVNEAFFADYFAKKGLSFKDHFIAVTCEGSPMDDTGKYLEVFHLWESIGGRFSSTSMVGGVVLGFAYGFEVFLQLLQGASAMDQIALQPNARENLPMLSALISIWNRNFLGYPTEAVIPYSSGLEFFPAHLQQCCMESNGKSIVQDGRRVGFSTSPVIWGEPGTNGQHSFFQCLHQGTDIIPVEFIGFEKSQKGEDISFQGTTSSQKLFANMIAQAIALACGSENTNPNKNFDGNRPSSVLVSSQLNPYSLGELLSYYENKIVFQGFCWGINSFDQEGVSLGKALANRVLELLEGADASNFPEAASLLTLFNIKFR.

Glu347 acts as the Proton donor in catalysis. Active-site residues include His378 and Lys493.

The protein belongs to the GPI family.

It localises to the cytoplasm. It catalyses the reaction alpha-D-glucose 6-phosphate = beta-D-fructose 6-phosphate. Its pathway is carbohydrate biosynthesis; gluconeogenesis. It participates in carbohydrate degradation; glycolysis; D-glyceraldehyde 3-phosphate and glycerone phosphate from D-glucose: step 2/4. Catalyzes the reversible isomerization of glucose-6-phosphate to fructose-6-phosphate. This Chlamydia pneumoniae (Chlamydophila pneumoniae) protein is Glucose-6-phosphate isomerase.